Consider the following 179-residue polypeptide: MSYSPSLKEIIAILQKYTSKNYQSNCKTRPDGKLELSLNGVFEEIVKTPGKTRYVTHKQLDQKLKDFKQDLMVELHDTFATKTDLKESEARINQKLEALIQIVMVQGEQIKVHGEQINKLTQAVEKQGEKIEAQGQQIQKVNETLNFVVESLGSIHKRLDSMEGRLDSMENRLDKLESK.

Belongs to the UPF0134 family.

The polypeptide is UPF0134 protein MPN_145 (Mycoplasma pneumoniae (strain ATCC 29342 / M129 / Subtype 1) (Mycoplasmoides pneumoniae)).